We begin with the raw amino-acid sequence, 514 residues long: Maturase K (514 aa).

This sequence belongs to the intron maturase 2 family. MatK subfamily.

It is found in the plastid. It localises to the chloroplast. In terms of biological role, usually encoded in the trnK tRNA gene intron. Probably assists in splicing its own and other chloroplast group II introns. This is Maturase K from Plantago argentea (Silver plantain).